The chain runs to 1157 residues: MSIRFIIGRAGAGKTRACLEAIRKELLARPYGPPLILLVPEQATFQIEYALAATPGLSGFIRARVLSFRRLAYRVLREVGGAARAHIGELGKRMVLRRLLEQRRSELRVLGRSSGRPGFADTLARTLGEMKTYCIGPDELARAAFDLREKGGAALLADKLEDLAKLCFDLEDYLAGRFTDPDDYLNLLADCLELSAEVRGTEVWVDGFSGFTPQEYRVLAALARTASRVNITLCADPAALSGKIDETSLFFPVRETYDRLLKMALQERIPLERPLILGGNTARFKSPAISHLEKYFFVRPAPPCLNCSEGVVLAAAANPKAEAEGVAREITALCRDRGYRYRDIVILLRDVDSYAGLISSIFADHGIPVFIDQKRPVMHHPMVELVRSALEAVTEDWAFDPVFRYLKTDLVPLSREEVDLLENYVLAHGIRGSRWTDGRPWEYRRELTLEEDPGLNGSESVELEKVNRIRHQATADLLEFCRSFMQAKNVREMSTALFNLLTGLKVPEQLESWSRQAEKEGRLEAAREHSLVWSGFTALLDQVVEALGDEVLEPGEYAAVIDAGLESLRLGLIPPGLDQVLVASLERSRNPEMRAAFVMGVNDGVLPARTFDQGIFSDLERERLKAAGLELAPGGRRKFFEEQYLVYIALTRSSERIYLSYPLADGEGRALMPSPIVARVKELLPDVEERVWPVEPNAALLDDLEFVTGPRRTLSYLASQMREFKAGRRIDPLWWDVYSWFAAGEMREHCKRVLSGLFHSNREDRLPPAVSMALYGRPLRASVSGLEKFRACPFAHFLSYGLKLKERAIFKLDAPDLGRFFHAALKLFGDRVREQGLDWGQLDREQCQEMAGEVVDLLAPRLSSEILLSTARRRYLTGKLRRTVQRAALVLAEHSRRSKFRPVGLELSFGPDGDLPAPVFTLADGSEMAVSGRIDRIEAAPSDEGVYLRIIDFKSGKVTVKLTDIYHGLKLQLLAYLDVALEHARTLTGGNGLPGAVLYFRIDDPLVNTDGPVPPGEEVEREILKKLRMTGLVLADPKAVRLMDAGLDGISDLIPVQIKADGSFAARSAVLTREQFALLRSYLRFQLASAGSEIIGGTVEIAPYRKGRYRSCQSCPFRPVCQFDLLVDGNVYRSIKDEDEGAIWSKLGRMCRKGWGQ.

Residues 1 to 299 (MSIRFIIGRA…SHLEKYFFVR (299 aa)) enclose the UvrD-like helicase ATP-binding domain. 8–15 (GRAGAGKT) is an ATP binding site. Positions 279-590 (GNTARFKSPA…LVASLERSRN (312 aa)) constitute a UvrD-like helicase C-terminal domain. [4Fe-4S] cluster is bound by residues cysteine 792, cysteine 1112, cysteine 1115, and cysteine 1121.

Belongs to the helicase family. AddB/RexB type 1 subfamily. In terms of assembly, heterodimer of AddA and AddB. Mg(2+) is required as a cofactor. Requires [4Fe-4S] cluster as cofactor.

Its function is as follows. The heterodimer acts as both an ATP-dependent DNA helicase and an ATP-dependent, dual-direction single-stranded exonuclease. Recognizes the chi site generating a DNA molecule suitable for the initiation of homologous recombination. The AddB subunit has 5' -&gt; 3' nuclease activity but not helicase activity. This Pelotomaculum thermopropionicum (strain DSM 13744 / JCM 10971 / SI) protein is ATP-dependent helicase/deoxyribonuclease subunit B.